The chain runs to 601 residues: Glutamine--fructose-6-phosphate aminotransferase [isomerizing] (601 aa).

C2 serves as the catalytic Nucleophile; for GATase activity. The Glutamine amidotransferase type-2 domain maps to 2–218; the sequence is CGIVGYIGYD…DHEIVIVKKD (217 aa). SIS domains lie at 284–423 and 453–591; these read IIND…EHGR and IATD…VDKP. K596 (for Fru-6P isomerization activity) is an active-site residue.

As to quaternary structure, homodimer.

The protein resides in the cytoplasm. It carries out the reaction D-fructose 6-phosphate + L-glutamine = D-glucosamine 6-phosphate + L-glutamate. Its function is as follows. Catalyzes the first step in hexosamine metabolism, converting fructose-6P into glucosamine-6P using glutamine as a nitrogen source. The polypeptide is Glutamine--fructose-6-phosphate aminotransferase [isomerizing] (Staphylococcus aureus (strain MRSA252)).